Reading from the N-terminus, the 104-residue chain is MSTYAIIKTGGKQVKVEVGQAIYVEKLDVEAGAEVTFNEVVLVGGETTKVGTPVVEGATVVGTVEKQGKQKKVVSYKYKPKKGSHRKQGHRQPYTKVVINAINA.

It belongs to the bacterial ribosomal protein bL21 family. Part of the 50S ribosomal subunit. Contacts protein L20.

Its function is as follows. This protein binds to 23S rRNA in the presence of protein L20. This is Large ribosomal subunit protein bL21 from Streptococcus agalactiae serotype Ia (strain ATCC 27591 / A909 / CDC SS700).